The primary structure comprises 456 residues: Kynurenine 3-monooxygenase (456 aa).

It belongs to the aromatic-ring hydroxylase family. KMO subfamily. Requires FAD as cofactor.

Its subcellular location is the mitochondrion outer membrane. The catalysed reaction is L-kynurenine + NADPH + O2 + H(+) = 3-hydroxy-L-kynurenine + NADP(+) + H2O. It functions in the pathway cofactor biosynthesis; NAD(+) biosynthesis; quinolinate from L-kynurenine: step 1/3. Its function is as follows. Catalyzes the hydroxylation of L-kynurenine (L-Kyn) to form 3-hydroxy-L-kynurenine (L-3OHKyn). Required for synthesis of quinolinic acid. The polypeptide is Kynurenine 3-monooxygenase (Candida albicans (strain SC5314 / ATCC MYA-2876) (Yeast)).